A 1744-amino-acid chain; its full sequence is MRLLWGLIWASSFFTLSLQKPRLLLFSPSVVHLGVPLSVGVQLQDVPRGQVVKGSVFLRNPSRNNVPCSPKVDFTLSSERDFALLSLQVPLKDAKSCGLHQLLRGPEVQLVAHSPWLKDSLSRTTNIQGINLLFSSRRGHLFLQTDQPIYNPGQRVRYRVFALDQKMRPSTDTITVMVENSHGLRVRKKEVYMPSSIFQDDFVIPDISEPGTWKISARFSDGLESNSSTQFEVKKYVLPNFEVKITPGKPYILTVPGHLDEMQLDIQARYIYGKPVQGVAYVRFGLLDEDGKKTFFRGLESQTKLVNGQSHISLSKAEFQDALEKLNMGITDLQGLRLYVAAAIIESPGGEMEEAELTSWYFVSSPFSLDLSKTKRHLVPGAPFLLQALVREMSGSPASGIPVKVSATVSSPGSVPEVQDIQQNTDGSGQVSIPIIIPQTISELQLSVSAGSPHPAIARLTVAAPPSGGPGFLSIERPDSRPPRVGDTLNLNLRAVGSGATFSHYYYMILSRGQIVFMNREPKRTLTSVSVFVDHHLAPSFYFVAFYYHGDHPVANSLRVDVQAGACEGKLELSVDGAKQYRNGESVKLHLETDSLALVALGALDTALYAAGSKSHKPLNMGKVFEAMNSYDLGCGPGGGDSALQVFQAAGLAFSDGDQWTLSRKRLSCPKEKTTRKKRNVNFQKAINEKLGQYASPTAKRCCQDGVTRLPMMRSCEQRAARVQQPDCREPFLSCCQFAESLRKKSRDKGQAGLQRALEILQEEDLIDEDDIPVRSFFPENWLWRVETVDRFQILTLWLPDSLTTWEIHGLSLSKTKGLCVATPVQLRVFREFHLHLRLPMSVRRFEQLELRPVLYNYLDKNLTVSVHVSPVEGLCLAGGGGLAQQVLVPAGSARPVAFSVVPTAAAAVSLKVVARGSFEFPVGDAVSKVLQIEKEGAIHREELVYELNPLDHRGRTLEIPGNSDPNMIPDGDFNSYVRVTASDPLDTLGSEGALSPGGVASLLRLPRGCGEQTMIYLAPTLAASRYLDKTEQWSTLPPETKDHAVDLIQKGYMRIQQFRKADGSYAAWLSRDSSTWLTAFVLKVLSLAQEQVGGSPEKLQETSNWLLSQQQADGSFQDPCPVLDRSMQGGLVGNDETVALTAFVTIALHHGLAVFQDEGAEPLKQRVEASISKANSFLGEKASAGLLGAHAAAITAYALTLTKAPVDLLGVAHNNLMAMAQETGDNLYWGSVTGSQSNAVSPTPAPRNPSDPMPQAPALWIETTAYALLHLLLHEGKAEMADQASAWLTRQGSFQGGFRSTQDTVIALDALSAYWIASHTTEERGLNVTLSSTGRNGFKSHALQLNNRQIRGLEEELQFSLGSKINVKVGGNSKGTLKVLRTYNVLDMKNTTCQDLQIEVTVKGHVEYTMEANEDYEDYEYDELPAKDDPDAPLQPVTPLQLFEGRRNRRRREAPKVVEEQESRVHYTVCIWRNGKVGLSGMAIADVTLLSGFHALRADLEKLTSLSDRYVSHFETEGPHVLLYFDSVPTSRECVGFEAVQEVPVGLVQPASATLYDYYNPERRCSVFYGAPSKSRLLATLCSAEVCQCAEGKCPRQRRALERGLQDEDGYRMKFACYYPRVEYGFQVKVLREDSRAAFRLFETKITQVLHFTKDVKAAANQMRNFLVRASCRLRLEPGKEYLIMGLDGATYDLEGHPQYLLDSNSWIEEMPSERLCRSTRQRAACAQLNDFLQEYGTQGCQV.

Positions 1 to 19 (MRLLWGLIWASSFFTLSLQ) are cleaved as a signal peptide. Cys-68 and Cys-97 are oxidised to a cystine. N-linked (GlcNAc...) asparagine glycosylation is present at Asn-226. An intrachain disulfide couples Cys-635 to Cys-669. Positions 676-679 (RKKR) are excised as a propeptide. 3 disulfide bridges follow: Cys-702/Cys-728, Cys-703/Cys-735, and Cys-716/Cys-736. One can recognise an Anaphylatoxin-like domain in the interval 702-736 (CCQDGVTRLPMMRSCEQRAARVQQPDCREPFLSCC). Asn-862 carries N-linked (GlcNAc...) asparagine glycosylation. Ser-918 carries the phosphoserine; by FAM20C modification. The isoglutamyl cysteine thioester (Cys-Gln) cross-link spans 1010–1013 (CGEQ). O-linked (GalNAc...) threonine glycosylation occurs at Thr-1244. Asn-1328 is a glycosylation site (N-linked (GlcNAc...) (complex) asparagine). N-linked (GlcNAc...) asparagine glycosylation occurs at Asn-1391. A sulfotyrosine mark is found at Tyr-1417, Tyr-1420, and Tyr-1422. A propeptide spanning residues 1447-1453 (RRNRRRR) is cleaved from the precursor. 5 disulfide bridges follow: Cys-1471–Cys-1535, Cys-1583–Cys-1588, Cys-1595–Cys-1673, Cys-1618–Cys-1742, and Cys-1718–Cys-1727. The region spanning 1595–1742 (CPRQRRALER…FLQEYGTQGC (148 aa)) is the NTR domain.

As to quaternary structure, complement circulates in blood as a disulfide-linked trimer of an alpha, beta and gamma chain. In terms of assembly, complement C4b is composed of complement C4b-A, complement C4 beta and complement C4 gamma chains that are associated via disulfide bonds. Non-enzymatic component of the C3 convertase, also named C4bC2b, composed of the serine protease complement C2b (C2), as well as complement C4b. Non-enzymatic component of the C5 convertase, also named C4bC2bC3b, composed of the serine protease complement C2b (C2), complement C3b, as well as complement C4b. In terms of processing, prior to secretion, the single-chain precursor is enzymatically cleaved by plasminogen (PLG) to yield non-identical chains alpha, beta and gamma. During activation of the complement systems, the alpha chain is cleaved into C4a and C4b by different proteases depending on the complement pathway: C4b stays linked to the beta and gamma chains, while C4a is released in the plasma. The alpha chain is cleaved by C1S to generate C4a and C4b following activation by the classical complement system. The alpha chain is cleaved to generate C4a and C4b by MASP2 following activation by the lectin complement system. The alpha chain is cleaved by GZMK to generate C4a and C4b following activation by the GZMK complement system. Further degradation of C4b by C1 into the inactive fragments C4c and C4d blocks the generation of C3 convertase. The proteolytic cleavages often are incomplete so that many structural forms can be found in plasma. Post-translationally, upon activation, the internal thioester bond reacts with carbohydrate antigens on the target surface to form amide or ester bonds, leading to covalent association with the surface of pathogens. Ser-1236 of complement C4b interacts with complement C3b via a thioester linkage. In terms of processing, N- and O-glycosylated. O-glycosylated with a core 1 or possibly core 8 glycan. Complement component C4 is expressed at highest levels in the liver, at moderate levels in the adrenal cortex, adrenal medulla, thyroid gland, and the kidney, and at lowest levels in the heart, ovary, small intestine, thymus, pancreas and spleen. The extra-hepatic sites of expression may be important for the local protection and inflammatory response.

Its subcellular location is the secreted. The protein resides in the synapse. The protein localises to the cell projection. It localises to the axon. It is found in the dendrite. Its subcellular location is the cell surface. Its activity is regulated as follows. Specifically inhibited by nanobody hC4Nb8, inhibiting the classical complement pathway. Specifically inhibited by NbB5, NbE11 and NbH9 nanobodies, and to a lesser extent by NbH11 and NbE3 nanobodies. Precursor of non-enzymatic components of the classical, lectin and GZMK complement pathways, which consist in a cascade of proteins that leads to phagocytosis and breakdown of pathogens and signaling that strengthens the adaptive immune system. Its function is as follows. Non-enzymatic component of C3 and C5 convertases. Generated following cleavage by complement proteases (C1S, MASP2 or GZMK, depending on the complement pathway), it covalently attaches to the surface of pathogens, where it acts as an opsonin that marks the surface of antigens for removal. It then recruits the serine protease complement C2b to form the C3 and C5 convertases, which cleave and activate C3 and C5, respectively, the next components of the complement pathways. Complement C4b-A isotype is responsible for effective binding to form amide bonds with immune aggregates or protein antigens, while complement C4b-B isotype catalyzes the transacylation of the thioester carbonyl group to form ester bonds with carbohydrate antigens. Functionally, putative humoral mediator released following cleavage by complement proteases (C1S, MASP2 or GZMK, depending on the complement pathway). While it is strongly similar to anaphylatoxins, its role is unclear. Was reported to act as a mediator of local inflammatory process; however these effects were probably due to contamination with C3a and/C5a anaphylatoxins in biological assays. The chain is Complement C4-A from Homo sapiens (Human).